Here is a 374-residue protein sequence, read N- to C-terminus: DNA replication and repair protein RecF (374 aa).

30–37 (GENAQGKT) contacts ATP.

The protein belongs to the RecF family.

It localises to the cytoplasm. Its function is as follows. The RecF protein is involved in DNA metabolism; it is required for DNA replication and normal SOS inducibility. RecF binds preferentially to single-stranded, linear DNA. It also seems to bind ATP. This Lactiplantibacillus plantarum (strain ATCC BAA-793 / NCIMB 8826 / WCFS1) (Lactobacillus plantarum) protein is DNA replication and repair protein RecF.